A 711-amino-acid polypeptide reads, in one-letter code: Mitochondrial intermediate peptidase (711 aa).

The N-terminal 33 residues, 1 to 33 (MLLAAGARYARRLCGRGAAAALQGRTGRSCARD), are a transit peptide targeting the mitochondrion. Lys-124 is modified (N6-acetyllysine). His-493 contributes to the Zn(2+) binding site. Residue Glu-494 is part of the active site. Residues His-497 and His-500 each coordinate Zn(2+).

The protein belongs to the peptidase M3 family. In terms of assembly, monomer. Requires Zn(2+) as cofactor.

It localises to the mitochondrion matrix. It catalyses the reaction Release of an N-terminal octapeptide as second stage of processing of some proteins imported into the mitochondrion.. Activity is divalent cation-dependent. It is stimulated by manganese, magnesium or calcium ions and reversibly inhibited by zinc, cobalt and iron. Cleaves proteins, imported into the mitochondrion, to their mature size. This Mus musculus (Mouse) protein is Mitochondrial intermediate peptidase (Mipep).